Here is a 434-residue protein sequence, read N- to C-terminus: Na(+)/H(+) antiporter NhaA 1 (434 aa).

A compositionally biased stretch (pro residues) spans methionine 1–proline 15. The segment at methionine 1–glycine 21 is disordered. The next 12 helical transmembrane spans lie at glycine 34–alanine 54, leucine 74–leucine 94, alanine 112–isoleucine 132, glycine 143–glycine 163, phenylalanine 173–tyrosine 193, glycine 196–valine 216, alanine 222–isoleucine 242, threonine 245–valine 265, isoleucine 294–leucine 314, isoleucine 326–alanine 346, valine 362–leucine 382, and alanine 393–leucine 413.

The protein belongs to the NhaA Na(+)/H(+) (TC 2.A.33) antiporter family.

It is found in the cell membrane. It catalyses the reaction Na(+)(in) + 2 H(+)(out) = Na(+)(out) + 2 H(+)(in). Its function is as follows. Na(+)/H(+) antiporter that extrudes sodium in exchange for external protons. This chain is Na(+)/H(+) antiporter NhaA 1, found in Clavibacter michiganensis subsp. michiganensis (strain NCPPB 382).